We begin with the raw amino-acid sequence, 162 residues long: MAEEKTYPMTAEGLAKLQAELDDLITNKRPAITSRIQEARSFGDLSENSEYQSAKDEQAFVEGRVKQLQQMIQFAQVIDASSASKNVVTLGKKISFKEVPDGDEETYTIVGSAESDPLSGKISNDSPMGKALLDHKTGDKVEIPLPENHSVTVEILHVSKAK.

Residues 48 to 76 (NSEYQSAKDEQAFVEGRVKQLQQMIQFAQ) are a coiled coil. Positions 111–132 (GSAESDPLSGKISNDSPMGKAL) are disordered.

This sequence belongs to the GreA/GreB family.

Necessary for efficient RNA polymerase transcription elongation past template-encoded arresting sites. The arresting sites in DNA have the property of trapping a certain fraction of elongating RNA polymerases that pass through, resulting in locked ternary complexes. Cleavage of the nascent transcript by cleavage factors such as GreA or GreB allows the resumption of elongation from the new 3'terminus. GreA releases sequences of 2 to 3 nucleotides. This is Transcription elongation factor GreA from Oenococcus oeni (strain ATCC BAA-331 / PSU-1).